Reading from the N-terminus, the 337-residue chain is Angiopoietin-related protein 7 (337 aa).

A signal peptide spans 1-21 (MLRETWLCVILVAFVSHPVWL). Residues 30-110 (QLKAAGCCEE…DIMQLQAAQT (81 aa)) adopt a coiled-coil conformation. Asparagine 49 carries an N-linked (GlcNAc...) asparagine glycan. Residues 113 to 334 (QTSADAIYDC…RVEMKIRPEA (222 aa)) enclose the Fibrinogen C-terminal domain. Cysteine 122 and cysteine 153 are joined by a disulfide. 2 N-linked (GlcNAc...) asparagine glycosylation sites follow: asparagine 244 and asparagine 258. Cysteine 276 and cysteine 289 are disulfide-bonded. Residue asparagine 320 is glycosylated (N-linked (GlcNAc...) asparagine).

As to quaternary structure, homotetramer; disulfide-linked.

It localises to the secreted. Its function is as follows. Has a role in the formation and organization of the extracellular matrix. In the eye, it functions as a mediator of dexamethasone-induced matrix deposition in the trabecular meshwork, the tissue responsible for the outflow of the ocular aqueous humor and for the maintenance of intraocular pressure. Is a negative regulator of angiogenesis in the cornea, and plays a major role in maintaining corneal avascularity and transparency. The polypeptide is Angiopoietin-related protein 7 (Angptl7) (Mus musculus (Mouse)).